Consider the following 339-residue polypeptide: MENELMYMNWQEMIQPDKIQVEAATPFYGKFICEPLGRGFGITIGNALRRIIISSLHGAAITSVKIDNVMHEYSTVEGVLEDVSEIILNLKEVRLKTSTAAAKTIRIDAAGPGVVTAGDIASPDGRVEILNPESHIATLSEGATLKMEMTVKVGRGYALAEANKDEETPVNTIPIDAMFSPIRRVNYVVGNSRVKQKTDFDKLTLEVWTDGSVLPEDAVAFAAKIMKEQMNVFINFDESAEPEHAGRKDDSGGKVFNENLYRSVNELELSVRSSNCLKNAEIDKLYQLVQKTESEMLKTKNFGRKSLNEIKELLAEMGLSLGMDLEGFVPPAEDNKEGE.

The alpha N-terminal domain (alpha-NTD) stretch occupies residues 1 to 237 (MENELMYMNW…EQMNVFINFD (237 aa)). Positions 256-339 (FNENLYRSVN…PPAEDNKEGE (84 aa)) are alpha C-terminal domain (alpha-CTD).

This sequence belongs to the RNA polymerase alpha chain family. Homodimer. The RNAP catalytic core consists of 2 alpha, 1 beta, 1 beta' and 1 omega subunit. When a sigma factor is associated with the core the holoenzyme is formed, which can initiate transcription.

It carries out the reaction RNA(n) + a ribonucleoside 5'-triphosphate = RNA(n+1) + diphosphate. Functionally, DNA-dependent RNA polymerase catalyzes the transcription of DNA into RNA using the four ribonucleoside triphosphates as substrates. This Desulfosudis oleivorans (strain DSM 6200 / JCM 39069 / Hxd3) (Desulfococcus oleovorans) protein is DNA-directed RNA polymerase subunit alpha.